Reading from the N-terminus, the 175-residue chain is MSERIVLDEAAMKRTLMRMAHEILEYNRGTKDLVLLGVKTRGEFLAKSIQSKIQQIENTTVPTGTIDITQFRDDLELPTPKISEKSFVIDVDITDKVVIIIDDVLYTGRTVRASLDAILLHSRPQKIGLAALVDRGHRELPIRADFVGKNIPTARDEAVSVYVKETDGRNAVIIE.

A PRPP-binding motif is present at residues 98 to 110 (VIIIDDVLYTGRT).

Belongs to the purine/pyrimidine phosphoribosyltransferase family. PyrR subfamily. As to quaternary structure, homodimer and homohexamer; in equilibrium.

The enzyme catalyses UMP + diphosphate = 5-phospho-alpha-D-ribose 1-diphosphate + uracil. Regulates transcriptional attenuation of the pyrimidine nucleotide (pyr) operon by binding in a uridine-dependent manner to specific sites on pyr mRNA. This disrupts an antiterminator hairpin in the RNA and favors formation of a downstream transcription terminator, leading to a reduced expression of downstream genes. In terms of biological role, also displays a weak uracil phosphoribosyltransferase activity which is not physiologically significant. The sequence is that of Bifunctional protein PyrR from Staphylococcus carnosus (strain TM300).